Here is a 324-residue protein sequence, read N- to C-terminus: Sperm acrosome membrane-associated protein 6 (324 aa).

A signal peptide spans 1–26 (MALLALASAVPSALLALAVFRVPAWA). The short motif at 27–30 (CLLC) is the CXXC motif element. 6 disulfide bridges follow: Cys-27–Cys-139, Cys-30–Cys-142, Cys-41–Cys-55, Cys-124–Cys-147, Cys-128–Cys-153, and Cys-170–Cys-226. At 27 to 295 (CLLCFTTYSE…RPEALTPSNL (269 aa)) the chain is on the extracellular side. The CXXC motif signature appears at 139–142 (CSGC). The Ig-like domain occupies 150-236 (PLDCPVQDVT…VIKQDQRPLA (87 aa)). A glycan (N-linked (GlcNAc...) asparagine) is linked at Asn-243. Residues 296–316 (FLLAVLGALASASATVLAWMF) traverse the membrane as a helical segment. Topologically, residues 317–324 (FRWYCSGN) are cytoplasmic.

The protein belongs to the SPACA6 family. In terms of assembly, forms a complex with IZUMO1 and TMEM81 on spermatocyte cell membrane required for fertilization. In terms of tissue distribution, detected at the sperm head, equatorial region, neck and midpiece (at protein level). Expressed in testis.

Its subcellular location is the cytoplasmic vesicle. It is found in the secretory vesicle. The protein resides in the acrosome membrane. Functionally, sperm protein required for fusion of sperm with the egg membrane during fertilization. May regulate the expression of sperm surface protein DCST2. This Homo sapiens (Human) protein is Sperm acrosome membrane-associated protein 6.